Consider the following 504-residue polypeptide: DnaJ homolog subfamily C member 3 (504 aa).

An N-terminal signal peptide occupies residues 1–31; it reads MVAPGSVTSRLGSVFPFLLVLVDLQYEGAEC. TPR repeat units lie at residues 37–70, 72–104, 105–138, 154–187, 189–221, 222–255, 268–301, 306–339, and 340–373; these read VEKHLELGKKLLAAGQLADALSQFHAAVDGDPDN, IAYYRRATVFLAMGKSKAALPDLTKVIELKMDF, TAARLQRGHLLLKQGKLDEAEDDFKKVLKSNPSE, MQRLRSQALDAFESSDFTAAITFLDKILEVCVWD, ELRELRAECFIKEGEPRKAISDLKASSKLKNDN, TEAFYKISTLYYELGDHELSLSEVRECLKLDQDH, LNKLIESAEELIKEGRYTDAISKYESVMKTEPGV, IRSKERICHCFSKDEKPVEAIRVCSEVLQVEPDN, and VNALKDRAEAYLIEEMYDEAIQDYETAQEHNEND. A disulfide bridge links Cys248 with Cys258. Ser274 bears the Phosphoserine mark. A disulfide bridge links Cys313 with Cys329. The interval 375-393 is flexible linker; sequence QIREGLEKAQRLLKQSQRR. In terms of domain architecture, J spans 394-462; the sequence is DYYKILGVKR…EMRKKFDDGE (69 aa). Positions 451 to 481 are disordered; it reads DPEMRKKFDDGEDPLDAESQQGGGGNPFHRS.

Interacts with EIF2AK4/GCN2; this interaction occurs under endoplasmic reticulum (ER) stress, hypothermic and amino acid starving stress conditions and inhibits EIF2AK4/GCN2 kinase activity. Interacts with EIF2AK3. Interacts with EIF2AK2. Forms a trimeric complex with DNAJB1 and HSPA8. Interacts with THAP12.

The protein localises to the endoplasmic reticulum. Its function is as follows. Involved in the unfolded protein response (UPR) during endoplasmic reticulum (ER) stress. Acts as a negative regulator of the EIF2AK4/GCN2 kinase activity by preventing the phosphorylation of eIF-2-alpha at 'Ser-52' and hence attenuating general protein synthesis under ER stress, hypothermic and amino acid starving stress conditions. Co-chaperone of HSPA8/HSC70, it stimulates its ATPase activity. May inhibit both the autophosphorylation of EIF2AK2/PKR and the ability of EIF2AK2 to catalyze phosphorylation of the EIF2A. May inhibit EIF2AK3/PERK activity. In Bos taurus (Bovine), this protein is DnaJ homolog subfamily C member 3 (DNAJC3).